The following is a 131-amino-acid chain: Gem-associated protein 7 (131 aa).

N-acetylmethionine is present on Met-1. Residues 1-29 (MQTPVNIPVPVLRLPRGPDGFSRGFAPDG) form the SUZ-C domain. Thr-3 carries the post-translational modification Phosphothreonine. A Sm domain is found at 65 to 131 (RYLRSLLAMV…SDIISYTFKP (67 aa)).

This sequence belongs to the gemin-7 family. Part of the core SMN complex that contains SMN1, GEMIN2/SIP1, DDX20/GEMIN3, GEMIN4, GEMIN5, GEMIN6, GEMIN7, GEMIN8 and STRAP/UNRIP. Part of the SMN-Sm complex that contains SMN1, GEMIN2/SIP1, DDX20/GEMIN3, GEMIN4, GEMIN5, GEMIN6, GEMIN7, GEMIN8, STRAP/UNRIP and the Sm proteins SNRPB, SNRPD1, SNRPD2, SNRPD3, SNRPE, SNRPF and SNRPG. Interacts with GEMIN6; the interaction is direct. Interacts with STRAP/UNRIP; the interaction is direct. Interacts with GEMIN8; the interaction is direct. Interacts with SNRPB, SNRPD2, SNRPD3 and SNRPE; the interaction is direct.

The protein localises to the nucleus. It localises to the nucleoplasm. It is found in the gem. Its subcellular location is the cytoplasm. Functionally, the SMN complex catalyzes the assembly of small nuclear ribonucleoproteins (snRNPs), the building blocks of the spliceosome, and thereby plays an important role in the splicing of cellular pre-mRNAs. Most spliceosomal snRNPs contain a common set of Sm proteins SNRPB, SNRPD1, SNRPD2, SNRPD3, SNRPE, SNRPF and SNRPG that assemble in a heptameric protein ring on the Sm site of the small nuclear RNA to form the core snRNP (Sm core). In the cytosol, the Sm proteins SNRPD1, SNRPD2, SNRPE, SNRPF and SNRPG are trapped in an inactive 6S pICln-Sm complex by the chaperone CLNS1A that controls the assembly of the core snRNP. To assemble core snRNPs, the SMN complex accepts the trapped 5Sm proteins from CLNS1A forming an intermediate. Binding of snRNA inside 5Sm triggers eviction of the SMN complex, thereby allowing binding of SNRPD3 and SNRPB to complete assembly of the core snRNP. This Homo sapiens (Human) protein is Gem-associated protein 7 (GEMIN7).